The sequence spans 693 residues: Lamina-associated polypeptide 2, isoforms alpha/zeta (693 aa).

Positions leucine 5 to arginine 48 constitute an LEM-like domain. Disordered stretches follow at residues arginine 48–glutamate 113, leucine 148–threonine 211, and threonine 227–proline 270. Residues asparagine 49–aspartate 107 are linker. Serine 59, serine 66, and serine 67 each carry phosphoserine. Threonine 74 carries the post-translational modification Phosphothreonine. Phosphoserine occurs at positions 79 and 82. Omega-N-methylarginine is present on residues arginine 85 and arginine 87. Positions lysine 96–aspartate 105 are enriched in basic and acidic residues. The region spanning aspartate 108–glycine 152 is the LEM domain. Threonine 153 bears the Phosphothreonine mark. The segment covering glutamate 154–asparagine 177 has biased composition (polar residues). A phosphoserine mark is found at serine 155 and serine 158. Phosphothreonine is present on residues threonine 159 and threonine 163. 2 positions are modified to phosphoserine: serine 165 and serine 167. Residues aspartate 178–lysine 190 show a composition bias toward basic and acidic residues. Residues lysine 190–valine 196 carry the Nuclear localization signal motif. Serine 206 is subject to N6-acetyllysine. The segment covering threonine 245–cysteine 254 has biased composition (basic and acidic residues). Position 310 is a phosphoserine (serine 310). Arginine 329 is modified (omega-N-methylarginine). The interval lysine 332–phenylalanine 351 is disordered. Phosphoserine is present on residues serine 349, serine 352, serine 368, serine 420, and serine 422. The span at glutamine 412–serine 422 shows a compositional bias: low complexity. The disordered stretch occupies residues glutamine 412–serine 442. Residues threonine 557 to aspartate 656 adopt a coiled-coil conformation. At lysine 655 the chain carries N6-acetyllysine.

This sequence belongs to the LEM family. As to quaternary structure, homooligomer. Interacts with LMNA, BANF1 and RB1 and with chromosomes. Associates directly or indirectly with lamins at specific cell-cycle stages. Interacts with CMTM6. Phosphorylated in a mitose-specific manner.

It is found in the nucleus. It localises to the chromosome. Functionally, may be involved in the structural organization of the nucleus and in the post-mitotic nuclear assembly. Plays an important role, together with LMNA, in the nuclear anchorage of RB1. This is Lamina-associated polypeptide 2, isoforms alpha/zeta (Tmpo) from Mus musculus (Mouse).